Consider the following 344-residue polypeptide: Outer membrane protein A (344 aa).

Over 1–14 (MKAIFVLNAAPKDN) the chain is Periplasmic. Residues 15-24 (TWYAGGKLGW) traverse the membrane as a beta stranded segment. Topologically, residues 25-49 (SQYHDTGFYGNGFQNNNGPTRNDQL) are extracellular. Residues 50-59 (GAGAFGGYQV) form a beta stranded membrane-spanning segment. The Periplasmic segment spans residues 60–62 (NPY). A beta stranded membrane pass occupies residues 63–71 (LGFEMGYDW). Topologically, residues 72–89 (LGRMAYKGSVDNGAFKAQ) are extracellular. The beta stranded transmembrane segment at 90–100 (GVQLTAKLGYP) threads the bilayer. At 101–104 (ITDD) the chain is on the periplasmic side. Residues 105 to 114 (LDIYTRLGGM) traverse the membrane as a beta stranded segment. Residues 115 to 139 (VWRADSKGNYASTGVSRSEHDTGVS) lie on the Extracellular side of the membrane. A beta stranded transmembrane segment spans residues 140–149 (PVFAGGVEWA). Residues 150–153 (VTRD) are Periplasmic-facing. A beta stranded membrane pass occupies residues 154–162 (IATRLEYQW). Topologically, residues 163 to 179 (VNNIGDAGTVGTRPDNG) are extracellular. A beta stranded transmembrane segment spans residues 180–188 (MLSLGVSYR). Residues 189–344 (FGQEDAAPVV…YKEVVTQPQA (156 aa)) lie on the Periplasmic side of the membrane. 4 repeat units span residues 199–200 (AP), 201–202 (AP), 203–204 (AP), and 205–206 (AP). Residues 199–206 (APAPAPAP) are 4 X 2 AA tandem repeats of A-P. Residues 208-336 (VATKHFTLKS…RVEIEVKGYK (129 aa)) form the OmpA-like domain. The cysteines at positions 309 and 321 are disulfide-linked.

It belongs to the outer membrane OOP (TC 1.B.6) superfamily. OmpA family. In terms of assembly, monomer and homodimer.

Its subcellular location is the cell outer membrane. In terms of biological role, with TolR probably plays a role in maintaining the position of the peptidoglycan cell wall in the periplasm. Acts as a porin with low permeability that allows slow penetration of small solutes; an internal gate slows down solute passage. Functionally, required for conjugation with F-type plasmids; probably serves as the mating receptor on recipient cells. This is Outer membrane protein A from Klebsiella pneumoniae.